Reading from the N-terminus, the 808-residue chain is Ribosome biogenesis protein BOP1 homolog (808 aa).

Composition is skewed to low complexity over residues 1–25 and 33–50; these read MTSP…LTPC and ATSS…SSFD. The segment at 1–55 is disordered; that stretch reads MTSPKGKPSPKRSAPAPATAALTPCAEERTEGATSSASASASSHISSSFDSPRDD. 5 WD repeats span residues 430-469, 640-680, 682-720, 724-766, and 777-808; these read GHTA…LMKR, KFSE…RRFK, SGGV…KPYK, SHKG…DYNK, and KHQR…AWTE.

This sequence belongs to the WD repeat BOP1/ERB1 family.

The protein localises to the nucleus. It localises to the nucleolus. Its subcellular location is the nucleoplasm. Functionally, required for maturation of ribosomal RNAs and formation of the large ribosomal subunit. In Leishmania major, this protein is Ribosome biogenesis protein BOP1 homolog.